Reading from the N-terminus, the 346-residue chain is Ly6/PLAUR domain-containing protein 3 (346 aa).

The signal sequence occupies residues 1 to 30 (MDPARKAGAQAMIWTAGWLLLLLLRGGAQA). UPAR/Ly6 domains lie at 33 to 126 (CYSC…ALDP) and 140 to 222 (CYSC…SRCN). 4 N-linked (GlcNAc...) asparagine glycosylation sites follow: N118, N163, N176, and N183. Residues 233–324 (PRIPPLVRLP…KGGPQQPHNK (92 aa)) form a disordered region. Residues 234-246 (RIPPLVRLPPPEP) are compositionally biased toward pro residues. Low complexity predominate over residues 247–269 (TTVASTTSVTTSTSAPVRPTSTT). The segment covering 283 to 295 (GVEHEASRDEEPR) has biased composition (basic and acidic residues). C326 is lipidated: GPI-anchor amidated cysteine. A propeptide spans 327–346 (VAPTAGLAALLLAVAAGVLL) (removed in mature form).

As to quaternary structure, binds laminin-1 and laminin-5. Interacts with LGALS3. Interacts with AGR2 and AGR3. Post-translationally, N-glycosylated and O-glycosylated. Expressed in placenta, skin and urothelium. Found in suprabasal keratinocytes of chronic wounds. Weak expression is found in esophagus and peripheral blood mononuclear cells. Found in the majority of primary and metastatic transitional cell carcinomas (TCCs) and as well in breast cancer tissues, but not in adjacent normal tissues. High expression is found in the tumor component of some noninvasive superficial lesions and in invasive and metastatic urothelial cancers.

Its subcellular location is the cell membrane. Supports cell migration. May be involved in urothelial cell-matrix interactions. May be involved in tumor progression. The sequence is that of Ly6/PLAUR domain-containing protein 3 (LYPD3) from Homo sapiens (Human).